A 555-amino-acid chain; its full sequence is Potassium-transporting ATPase potassium-binding subunit (555 aa).

10 helical membrane-spanning segments follow: residues 2–22 (IWVA…PTGI), 60–80 (QYAL…YFIF), 130–150 (IGIT…VMAF), 173–193 (VFLP…VPQT), 246–266 (MSNI…PFTY), 278–298 (ILFV…TTSE), 374–394 (AGFV…GLMV), 412–432 (LIAV…ALAL), 483–503 (LVMF…AASL), and 525–545 (GIFI…MLVL).

Belongs to the KdpA family. In terms of assembly, the system is composed of three essential subunits: KdpA, KdpB and KdpC.

The protein localises to the cell membrane. Its function is as follows. Part of the high-affinity ATP-driven potassium transport (or Kdp) system, which catalyzes the hydrolysis of ATP coupled with the electrogenic transport of potassium into the cytoplasm. This subunit binds the extracellular potassium ions and delivers the ions to the membrane domain of KdpB through an intramembrane tunnel. This is Potassium-transporting ATPase potassium-binding subunit from Bacillus cereus (strain 03BB102).